The following is a 102-amino-acid chain: Envelope glycoprotein N (102 aa).

Residues 1–32 (MGKVLRKPFAKAVPLLFLAATWLLTGVLPAGA) form the signal peptide. Over 33 to 69 (SSPTNAAAASLTEAQDQFYSYTCNADTFSPSLTSFAS) the chain is Virion surface. Residues 70-90 (IWALLTLVLVIIASAIYLMYV) traverse the membrane as a helical segment. Residues 91–102 (CFNKFVNTLLTD) are Intravirion-facing.

The protein belongs to the herpesviridae glycoprotein N family. In terms of assembly, interacts (via N-terminus) with gM (via N-terminus). The gM-gN heterodimer forms the gCII complex. O-glycosylated. Contains alpha 2,6-sialic acid residues.

The protein localises to the virion membrane. It is found in the host membrane. Its subcellular location is the host Golgi apparatus. It localises to the host trans-Golgi network. Functionally, envelope glycoprotein necessary for proper maturation of gM and modulation of its membrane fusion activity. Also plays a critical role in virion morphogenesis. This Epstein-Barr virus (strain AG876) (HHV-4) protein is Envelope glycoprotein N.